Here is a 177-residue protein sequence, read N- to C-terminus: NADH-quinone oxidoreductase subunit B (177 aa).

4 residues coordinate [4Fe-4S] cluster: cysteine 56, cysteine 57, cysteine 121, and cysteine 151.

Belongs to the complex I 20 kDa subunit family. In terms of assembly, NDH-1 is composed of 14 different subunits. Subunits NuoB, C, D, E, F, and G constitute the peripheral sector of the complex. [4Fe-4S] cluster serves as cofactor.

Its subcellular location is the cell inner membrane. It catalyses the reaction a quinone + NADH + 5 H(+)(in) = a quinol + NAD(+) + 4 H(+)(out). Its function is as follows. NDH-1 shuttles electrons from NADH, via FMN and iron-sulfur (Fe-S) centers, to quinones in the respiratory chain. Couples the redox reaction to proton translocation (for every two electrons transferred, four hydrogen ions are translocated across the cytoplasmic membrane), and thus conserves the redox energy in a proton gradient. This is NADH-quinone oxidoreductase subunit B from Jannaschia sp. (strain CCS1).